A 272-amino-acid chain; its full sequence is MKPMPDQTDILPATADPIPAELLELLSEPRLVVEPGVAARVAAVAGPVLHGMGYRLVRIKVSGELGCTVQIMAERPDGTMLIEDCEAISKALSPVLDVADPIDKAYRLEVSSPGIDRPLVRRSDFERYAGYLVKIDMAVPHQGRKRFRGILGGIEGDAVHLQREGVRGDDDPAVLLTIEDISDARLVLTDELIAESMRRGKIAEREMKQNLGILPPPPPHAKKSDPTKSNAPKPKAAKAKSKVAKTPPKNTKEHRLAAERLRRGDIDPPEGD.

A disordered region spans residues 209-272 (QNLGILPPPP…RGDIDPPEGD (64 aa)). Residues 250 to 266 (NTKEHRLAAERLRRGDI) show a composition bias toward basic and acidic residues.

Belongs to the RimP family.

It localises to the cytoplasm. In terms of biological role, required for maturation of 30S ribosomal subunits. The sequence is that of Ribosome maturation factor RimP from Rhodopseudomonas palustris (strain BisA53).